The chain runs to 341 residues: Glyceraldehyde-3-phosphate dehydrogenase 3 (341 aa).

Residues 13 to 14 (RI), Asp35, and Arg85 contribute to the NAD(+) site. D-glyceraldehyde 3-phosphate is bound by residues 157-159 (SCT), Thr188, 217-218 (TG), and Arg240. The active-site Nucleophile is the Cys158. Asn322 is an NAD(+) binding site.

It belongs to the glyceraldehyde-3-phosphate dehydrogenase family. Homotetramer.

Its subcellular location is the cytoplasm. It catalyses the reaction D-glyceraldehyde 3-phosphate + phosphate + NAD(+) = (2R)-3-phospho-glyceroyl phosphate + NADH + H(+). It participates in carbohydrate degradation; glycolysis; pyruvate from D-glyceraldehyde 3-phosphate: step 1/5. In Caenorhabditis elegans, this protein is Glyceraldehyde-3-phosphate dehydrogenase 3 (gpd-3).